Here is a 219-residue protein sequence, read N- to C-terminus: Thiamine-phosphate synthase (219 aa).

4-amino-2-methyl-5-(diphosphooxymethyl)pyrimidine contacts are provided by residues 44-48 (QFREK) and N79. Mg(2+) contacts are provided by D80 and D99. S117 provides a ligand contact to 4-amino-2-methyl-5-(diphosphooxymethyl)pyrimidine. Residue 143–145 (TST) coordinates 2-[(2R,5Z)-2-carboxy-4-methylthiazol-5(2H)-ylidene]ethyl phosphate. 4-amino-2-methyl-5-(diphosphooxymethyl)pyrimidine is bound at residue K146. 2-[(2R,5Z)-2-carboxy-4-methylthiazol-5(2H)-ylidene]ethyl phosphate is bound by residues G175 and 195 to 196 (IS).

This sequence belongs to the thiamine-phosphate synthase family. The cofactor is Mg(2+).

It carries out the reaction 2-[(2R,5Z)-2-carboxy-4-methylthiazol-5(2H)-ylidene]ethyl phosphate + 4-amino-2-methyl-5-(diphosphooxymethyl)pyrimidine + 2 H(+) = thiamine phosphate + CO2 + diphosphate. It catalyses the reaction 2-(2-carboxy-4-methylthiazol-5-yl)ethyl phosphate + 4-amino-2-methyl-5-(diphosphooxymethyl)pyrimidine + 2 H(+) = thiamine phosphate + CO2 + diphosphate. The catalysed reaction is 4-methyl-5-(2-phosphooxyethyl)-thiazole + 4-amino-2-methyl-5-(diphosphooxymethyl)pyrimidine + H(+) = thiamine phosphate + diphosphate. The protein operates within cofactor biosynthesis; thiamine diphosphate biosynthesis; thiamine phosphate from 4-amino-2-methyl-5-diphosphomethylpyrimidine and 4-methyl-5-(2-phosphoethyl)-thiazole: step 1/1. In terms of biological role, condenses 4-methyl-5-(beta-hydroxyethyl)thiazole monophosphate (THZ-P) and 2-methyl-4-amino-5-hydroxymethyl pyrimidine pyrophosphate (HMP-PP) to form thiamine monophosphate (TMP). The chain is Thiamine-phosphate synthase from Bacillus cereus (strain AH187).